The following is an 85-amino-acid chain: High-potential iron-sulfur protein (85 aa).

Residues Cys43, Cys46, Cys63, and Cys77 each contribute to the [4Fe-4S] cluster site.

It belongs to the high-potential iron-sulfur protein (HiPIP) family. As to quaternary structure, homodimer.

The protein localises to the periplasm. Its function is as follows. Specific class of high-redox-potential 4Fe-4S ferredoxins. Functions in anaerobic electron transport in most purple and in some other photosynthetic bacteria and in at least one genus (Paracoccus) of halophilic, denitrifying bacteria. This chain is High-potential iron-sulfur protein, found in Allochromatium warmingii (Chromatium warmingii).